The sequence spans 192 residues: Phosphomevalonate kinase (192 aa).

Residues 17-23 (KRKSGKD) and R141 contribute to the ATP site. Residue N170 coordinates substrate. Residues H171 and Q180 each contribute to the ATP site.

Monomer.

It localises to the cytoplasm. The protein localises to the cytosol. The catalysed reaction is (R)-5-phosphomevalonate + ATP = (R)-5-diphosphomevalonate + ADP. The protein operates within isoprenoid biosynthesis; isopentenyl diphosphate biosynthesis via mevalonate pathway; isopentenyl diphosphate from (R)-mevalonate: step 2/3. Its function is as follows. Catalyzes the reversible ATP-dependent phosphorylation of mevalonate 5-phosphate to produce mevalonate diphosphate and ADP, a key step in the mevalonic acid mediated biosynthesis of isopentenyl diphosphate and other polyisoprenoid metabolites. The sequence is that of Phosphomevalonate kinase (Pmvk) from Mus musculus (Mouse).